Reading from the N-terminus, the 483-residue chain is Glutamate--tRNA ligase (483 aa).

The 'HIGH' region motif lies at 11 to 21; that stretch reads PSPTGHLHIGN. Residues 252–256 carry the 'KMSKS' region motif; that stretch reads KLSKR. Lys255 is a binding site for ATP.

The protein belongs to the class-I aminoacyl-tRNA synthetase family. Glutamate--tRNA ligase type 1 subfamily. Monomer.

It localises to the cytoplasm. It catalyses the reaction tRNA(Glu) + L-glutamate + ATP = L-glutamyl-tRNA(Glu) + AMP + diphosphate. In terms of biological role, catalyzes the attachment of glutamate to tRNA(Glu) in a two-step reaction: glutamate is first activated by ATP to form Glu-AMP and then transferred to the acceptor end of tRNA(Glu). In Bacillus velezensis (strain DSM 23117 / BGSC 10A6 / LMG 26770 / FZB42) (Bacillus amyloliquefaciens subsp. plantarum), this protein is Glutamate--tRNA ligase.